The chain runs to 221 residues: Putative N-acetylmannosamine-6-phosphate 2-epimerase (221 aa).

Belongs to the NanE family.

It carries out the reaction an N-acyl-D-glucosamine 6-phosphate = an N-acyl-D-mannosamine 6-phosphate. It functions in the pathway amino-sugar metabolism; N-acetylneuraminate degradation; D-fructose 6-phosphate from N-acetylneuraminate: step 3/5. In terms of biological role, converts N-acetylmannosamine-6-phosphate (ManNAc-6-P) to N-acetylglucosamine-6-phosphate (GlcNAc-6-P). This is Putative N-acetylmannosamine-6-phosphate 2-epimerase from Clostridium perfringens (strain ATCC 13124 / DSM 756 / JCM 1290 / NCIMB 6125 / NCTC 8237 / Type A).